The sequence spans 723 residues: Transient receptor potential cation channel subfamily V member 5 (723 aa).

Residues 1–320 (MGAKTPWIQL…SLKWKKYGQP (320 aa)) lie on the Cytoplasmic side of the membrane. ANK repeat units lie at residues 38 to 68 (IWESPLLRAAKENDMCTLKKLQHDQNCDFRQ), 72 to 101 (LGETALHVAALYDNLDAAIMLMEAAPYLVT), 110 to 139 (VGQTALHIAVMNQNVNLVRALLARGASASA), 156 to 185 (YGEHPLSFAACVGSEEIVRLLIEHGADIRA), 189 to 222 (LGNTVLHILVLQPNKTFACQMYNLLLSYDGGDHL), and 232 to 261 (QGLTPFKLAGVEGNTVMFQHLMQKRKRIQW). A helical membrane pass occupies residues 321-341 (YFCLLGALYIFYMVCFTTCCV). Topologically, residues 342–378 (YRPLKFRDANRTHVRDNTIMEQKSLQEAYVTYQDKIR) are extracellular. Residues 379–401 (LVGELVTVIGAVIILLLEIPDIF) form a helical membrane-spanning segment. The Extracellular segment spans residues 402–412 (RVGASRYFGQT). The chain crosses the membrane as a helical span at residues 413–435 (VLGGPFHVIIITYASLVLLTMAM). At 436–441 (RLTNVN) the chain is on the cytoplasmic side. Residues 442 to 462 (GEVVPMSMALVLGWCSVMYFA) form a helical membrane-spanning segment. Residues 463–485 (RGFQMLGPFTIMIQKMIFGDLLR) are Extracellular-facing. Residues 486–506 (FCWLMAMVILGFASAFYIIFQ) form a helical membrane-spanning segment. The segment at residues 517 to 537 (SDYPTAMFSTFELFLTIIDGP) is an intramembrane region (pore-forming). Residue aspartate 535 participates in Ca(2+) binding. Residues 550-570 (VTYATFAIIATLLMLNLFIAM) form a helical membrane-spanning segment. The Cytoplasmic portion of the chain corresponds to 571–723 (MGDTHWRVAQ…EGDGEEIYQF (153 aa)). The interaction with S100A10 stretch occupies residues 591 to 595 (VATTV). An involved in Ca(2+)-dependent inactivation region spans residues 643–646 (AFKS). The segment at 651–673 (EVQEQLSEKQPSGTETGTLARGS) is disordered. The segment covering 654–667 (EQLSEKQPSGTETG) has biased composition (polar residues). A Phosphothreonine modification is found at threonine 678. Position 682 is a phosphoserine (serine 682). The segment at 693 to 723 (RGWEILRRNTLGHLNLGLDPGEGDGEEIYQF) is involved in Ca(2+)-dependent inactivation.

Belongs to the transient receptor (TC 1.A.4) family. TrpV subfamily. TRPV5 sub-subfamily. Homotetramer and probably heterotetramer with TRPV6. Interacts with TRPV6. Interacts with S100A10 and probably with the ANAX2-S100A10 heterotetramer. The interaction with S100A10 is required for the trafficking to the plasma membrane. Interacts with calmodulin. Interacts with BSPRY, which results in its inactivation. In terms of processing, glycosylated. As to expression, detected in kidney cortex (at protein level).

The protein localises to the apical cell membrane. It catalyses the reaction Ca(2+)(in) = Ca(2+)(out). Activated by WNK3. In terms of biological role, constitutively active calcium selective cation channel thought to be involved in Ca(2+) reabsorption in kidney and intestine. Required for normal Ca(2+) reabsorption in the kidney distal convoluted tubules. The channel is activated by low internal calcium level and the current exhibits an inward rectification. A Ca(2+)-dependent feedback regulation includes fast channel inactivation and slow current decay. Heteromeric assembly with TRPV6 seems to modify channel properties. TRPV5-TRPV6 heteromultimeric concatemers exhibit voltage-dependent gating. The polypeptide is Transient receptor potential cation channel subfamily V member 5 (Trpv5) (Mus musculus (Mouse)).